Reading from the N-terminus, the 354-residue chain is UDP-N-acetylglucosamine--N-acetylmuramyl-(pentapeptide) pyrophosphoryl-undecaprenol N-acetylglucosamine transferase (354 aa).

UDP-N-acetyl-alpha-D-glucosamine is bound by residues 15–17, Asn-127, Arg-163, Ser-191, Ile-244, 263–268, and Gln-288; these read TGG and ALTVSE.

It belongs to the glycosyltransferase 28 family. MurG subfamily.

The protein localises to the cell inner membrane. The enzyme catalyses di-trans,octa-cis-undecaprenyl diphospho-N-acetyl-alpha-D-muramoyl-L-alanyl-D-glutamyl-meso-2,6-diaminopimeloyl-D-alanyl-D-alanine + UDP-N-acetyl-alpha-D-glucosamine = di-trans,octa-cis-undecaprenyl diphospho-[N-acetyl-alpha-D-glucosaminyl-(1-&gt;4)]-N-acetyl-alpha-D-muramoyl-L-alanyl-D-glutamyl-meso-2,6-diaminopimeloyl-D-alanyl-D-alanine + UDP + H(+). It functions in the pathway cell wall biogenesis; peptidoglycan biosynthesis. Cell wall formation. Catalyzes the transfer of a GlcNAc subunit on undecaprenyl-pyrophosphoryl-MurNAc-pentapeptide (lipid intermediate I) to form undecaprenyl-pyrophosphoryl-MurNAc-(pentapeptide)GlcNAc (lipid intermediate II). In Serratia proteamaculans (strain 568), this protein is UDP-N-acetylglucosamine--N-acetylmuramyl-(pentapeptide) pyrophosphoryl-undecaprenol N-acetylglucosamine transferase.